Reading from the N-terminus, the 601-residue chain is Potassium channel KAT2 (601 aa).

The Cytoplasmic portion of the chain corresponds to methionine 1–glutamate 42. Residues threonine 43–leucine 63 traverse the membrane as a helical segment. Over arginine 64–serine 71 the chain is Extracellular. A helical transmembrane segment spans residues leucine 72–alanine 92. Topologically, residues tyrosine 93 to tyrosine 112 are cytoplasmic. Residues phenylalanine 113–isoleucine 133 traverse the membrane as a helical segment. The Extracellular segment spans residues phenylalanine 134–arginine 144. The helical; Voltage-sensor transmembrane segment at leucine 145–glutamate 165 threads the bilayer. Over lysine 166 to lysine 179 the chain is Cytoplasmic. Residues leucine 180 to aspartate 200 form a helical membrane-spanning segment. Residues arginine 201–valine 227 lie on the Extracellular side of the membrane. An intramembrane region (pore-forming) is located at residues threonine 228–alanine 247. Residues glutamate 248–arginine 251 are Extracellular-facing. Residues glutamate 252–glycine 272 traverse the membrane as a helical segment. Topologically, residues asparagine 273–isoleucine 601 are cytoplasmic. An a nucleoside 3',5'-cyclic phosphate-binding site is contributed by leucine 356 to lysine 475. In terms of domain architecture, KHA spans arginine 530–isoleucine 601.

The protein belongs to the potassium channel family. Plant (TC 1.A.1.4) subfamily.

Its subcellular location is the membrane. In terms of biological role, probable inward-rectifying potassium channel. Assuming opened or closed conformations in response to the voltage difference across the membrane, the channel is activated by hyperpolarization. In Oryza sativa subsp. japonica (Rice), this protein is Potassium channel KAT2.